Reading from the N-terminus, the 204-residue chain is Pro-glucagon (204 aa).

The N-terminal stretch at 1–20 (MTSMYFVAGLLLMIVQGSWQ) is a signal peptide. Positions 84-109 (SGQQGVEEREKENLLDQLSSNGLARH) are excised as a propeptide. Arginine 145 carries the arginine amide modification. 2 consecutive propeptides follow at residues 149–161 (DFLE…DDIG) and 197–204 (RDLLGEYQ).

The protein belongs to the glucagon family. As to expression, isoform LPII is expressed in both pancreas and intestine. Expression of isoform LPI is restricted to the pancreas. Neither isoform is detected in salivary glands.

It is found in the secreted. Plays a key role in glucose metabolism and homeostasis. Regulates blood glucose by increasing gluconeogenesis and decreasing glycolysis. Functionally, potent stimulator of glucose-dependent insulin release. Plays important roles on gastric motility and the suppression of plasma glucagon levels. Its function is as follows. Stimulates intestinal growth and up-regulates villus height in the small intestine, concomitant with increased crypt cell proliferation and decreased enterocyte apoptosis. This chain is Pro-glucagon (GCG), found in Heloderma suspectum (Gila monster).